A 1171-amino-acid chain; its full sequence is Myosin-B/C (1171 aa).

The Myosin motor domain occupies 105–780 (ETVDDIGYLP…AAKELSILQR (676 aa)). 199 to 206 (GESGAGKT) is a binding site for ATP. Residues 671 to 681 (AHFIRCLKPNE) form an actin-binding region. The segment at 810–1171 (IHFLTRLESN…CFEACAPDRP (362 aa)) is tail.

Belongs to the TRAFAC class myosin-kinesin ATPase superfamily. Myosin family.

The protein resides in the cytoplasm. In terms of biological role, myosins are actin-based motor molecules with ATPase activity. Unconventional myosins serve in intracellular movements. Their highly divergent tails are presumed to bind to membranous compartments, which would be moved relative to actin filaments. Plays a role in proper daughter cell budding and separation. This is Myosin-B/C from Toxoplasma gondii.